Here is a 205-residue protein sequence, read N- to C-terminus: uncharacterized protein (205 aa).

The GST N-terminal domain maps to 1 to 82 (MIKVYGVPGW…MVLDRRPDLA (82 aa)). Residues Val53 and 66 to 67 (ET) each bind glutathione. The region spanning 86–205 (GRAERQLFQR…QEVLKRNEII (120 aa)) is the GST C-terminal domain.

This sequence belongs to the GST superfamily. Beta family.

This is an uncharacterized protein from Escherichia coli (strain K12).